Reading from the N-terminus, the 260-residue chain is MGRARSGPKRHVKRLAAPYAWPIPRKEGGKFAPRPYPGPHTMDTSVPLLILVRDMLGYADYAREARKIITRGEIYVDGVVRKEPKFPVGIMDVVEIPRTGDRYRVVMNEHHRLDVVPISEEEARVKVCRIKNKTYVRGGNLQITMHDGKNWLVEIEDPTDPKEDVYSVGDSLVLELPEPDSGESWKVVDHIPFEEGVWVYAMTGRHSGEVGRVVEIQTFEGPQEDLITVENPEGDQFQTTKGRLIAIGKDEPLVTVRKEE.

The 66-residue stretch at V46 to H111 folds into the S4 RNA-binding domain.

Belongs to the eukaryotic ribosomal protein eS4 family.

This is Small ribosomal subunit protein eS4 from Methanopyrus kandleri (strain AV19 / DSM 6324 / JCM 9639 / NBRC 100938).